The primary structure comprises 1040 residues: Multidrug resistance protein MdtB (1040 aa).

12 helical membrane-spanning segments follow: residues 16-36, 347-367, 369-389, 396-416, 440-460, 472-492, 537-557, 863-883, 888-908, 911-931, 968-988, and 998-1018; these read FIMR…AGII, LMMA…NIPA, IIPG…MVFL, LTLM…IVVI, IGFT…PLLF, FAIT…TLTP, WLTL…WVFI, LGST…VLGI, FIHP…ALLA, IAGS…IGIV, ILMT…STGV, and IGMV…TPVI.

Belongs to the resistance-nodulation-cell division (RND) (TC 2.A.6) family. MdtB subfamily. Part of a tripartite efflux system composed of MdtA, MdtB and MdtC. MdtB forms a heteromultimer with MdtC.

The protein localises to the cell inner membrane. Its function is as follows. The MdtABC tripartite complex confers resistance against novobiocin and deoxycholate. The chain is Multidrug resistance protein MdtB from Escherichia coli O81 (strain ED1a).